We begin with the raw amino-acid sequence, 693 residues long: Polyribonucleotide nucleotidyltransferase (693 aa).

Asp-486 and Asp-492 together coordinate Mg(2+). Positions Pro-553–Ile-612 constitute a KH domain. Positions Gly-622–Lys-690 constitute an S1 motif domain.

Belongs to the polyribonucleotide nucleotidyltransferase family. In terms of assembly, component of the RNA degradosome, which is a multiprotein complex involved in RNA processing and mRNA degradation. Mg(2+) serves as cofactor.

It is found in the cytoplasm. It carries out the reaction RNA(n+1) + phosphate = RNA(n) + a ribonucleoside 5'-diphosphate. Its function is as follows. Involved in mRNA degradation. Catalyzes the phosphorolysis of single-stranded polyribonucleotides processively in the 3'- to 5'-direction. In Dichelobacter nodosus (strain VCS1703A), this protein is Polyribonucleotide nucleotidyltransferase.